The chain runs to 273 residues: WIMGHMVNAIAQIDEFVNLGANSIETDVSFDKNANPEYTYHGIPCDCGRTCTKSEKFNVFLQGLQKATTPGDSKYQEKLVLVVFDLKSSSLYDNQASDAGKKLAKSLLQNYWKNGNNGGRAYIVLSIPNLAHYKLITGFKETLKTEGHPELMEKVGYDFSGNDDIDQVAKAYKKAGVTGHVWQSDGITNCLPRGLDRVKQAVANRDSSNGFINKVYYWTVDKRSTTRGALDAGVDGIMTNYPDVIADVLSESAYKSKFRIATYEDNPWETFKN.

The active site involves His-5. Mg(2+)-binding residues include Glu-25 and Asp-27. The Nucleophile role is filled by His-41. 2 disulfide bridges follow: Cys-45/Cys-51 and Cys-47/Cys-190. Asp-85 is a Mg(2+) binding site.

The protein belongs to the arthropod phospholipase D family. Class II subfamily. The cofactor is Mg(2+). As to expression, expressed by the venom gland.

Its subcellular location is the secreted. It catalyses the reaction an N-(acyl)-sphingosylphosphocholine = an N-(acyl)-sphingosyl-1,3-cyclic phosphate + choline. It carries out the reaction an N-(acyl)-sphingosylphosphoethanolamine = an N-(acyl)-sphingosyl-1,3-cyclic phosphate + ethanolamine. The catalysed reaction is a 1-acyl-sn-glycero-3-phosphocholine = a 1-acyl-sn-glycero-2,3-cyclic phosphate + choline. The enzyme catalyses a 1-acyl-sn-glycero-3-phosphoethanolamine = a 1-acyl-sn-glycero-2,3-cyclic phosphate + ethanolamine. Functionally, dermonecrotic toxins cleave the phosphodiester linkage between the phosphate and headgroup of certain phospholipids (sphingolipid and lysolipid substrates), forming an alcohol (often choline) and a cyclic phosphate. This toxin acts on sphingomyelin (SM). It may also act on ceramide phosphoethanolamine (CPE), lysophosphatidylcholine (LPC) and lysophosphatidylethanolamine (LPE), but not on lysophosphatidylserine (LPS), and lysophosphatidylglycerol (LPG). It acts by transphosphatidylation, releasing exclusively cyclic phosphate products as second products. Induces dermonecrosis, hemolysis, increased vascular permeability, edema, inflammatory response, and platelet aggregation. The polypeptide is Dermonecrotic toxin LdSicTox-alphaIB3aii (Loxosceles deserta (Desert recluse spider)).